The following is a 200-amino-acid chain: Cytochrome c biogenesis ATP-binding export protein CcmA (200 aa).

The region spanning 3-199 (LSGRRVICVR…DSRELRIGGV (197 aa)) is the ABC transporter domain. ATP is bound at residue 35–42 (GRNGSGKT).

This sequence belongs to the ABC transporter superfamily. CcmA exporter (TC 3.A.1.107) family. In terms of assembly, the complex is composed of two ATP-binding proteins (CcmA) and two transmembrane proteins (CcmB).

Its subcellular location is the cell inner membrane. The catalysed reaction is heme b(in) + ATP + H2O = heme b(out) + ADP + phosphate + H(+). In terms of biological role, part of the ABC transporter complex CcmAB involved in the biogenesis of c-type cytochromes; once thought to export heme, this seems not to be the case, but its exact role is uncertain. Responsible for energy coupling to the transport system. The polypeptide is Cytochrome c biogenesis ATP-binding export protein CcmA (Bradyrhizobium diazoefficiens (strain JCM 10833 / BCRC 13528 / IAM 13628 / NBRC 14792 / USDA 110)).